Reading from the N-terminus, the 329-residue chain is 4-hydroxythreonine-4-phosphate dehydrogenase (329 aa).

2 residues coordinate substrate: His-136 and Thr-137. Positions 166, 211, and 266 each coordinate a divalent metal cation. Positions 274, 283, and 292 each coordinate substrate.

The protein belongs to the PdxA family. As to quaternary structure, homodimer. Requires Zn(2+) as cofactor. Mg(2+) serves as cofactor. It depends on Co(2+) as a cofactor.

Its subcellular location is the cytoplasm. The catalysed reaction is 4-(phosphooxy)-L-threonine + NAD(+) = 3-amino-2-oxopropyl phosphate + CO2 + NADH. It participates in cofactor biosynthesis; pyridoxine 5'-phosphate biosynthesis; pyridoxine 5'-phosphate from D-erythrose 4-phosphate: step 4/5. Functionally, catalyzes the NAD(P)-dependent oxidation of 4-(phosphooxy)-L-threonine (HTP) into 2-amino-3-oxo-4-(phosphooxy)butyric acid which spontaneously decarboxylates to form 3-amino-2-oxopropyl phosphate (AHAP). The protein is 4-hydroxythreonine-4-phosphate dehydrogenase of Escherichia coli O17:K52:H18 (strain UMN026 / ExPEC).